The primary structure comprises 443 residues: Phosphatidate cytidylyltransferase 2 (443 aa).

The segment covering 1–38 has biased composition (basic and acidic residues); the sequence is MTELRQRAVREDAPPEDKESESEAKLDGETASDSESRA. The disordered stretch occupies residues 1-51; sequence MTELRQRAVREDAPPEDKESESEAKLDGETASDSESRAETAPPPTSIDDTP. Serine 20 is subject to Phosphoserine. The residue at position 30 (threonine 30) is a Phosphothreonine. Residues serine 32, serine 34, and serine 36 each carry the phosphoserine modification. Phosphothreonine is present on threonine 50. A run of 6 helical transmembrane segments spans residues 78–98, 129–149, 165–185, 212–232, 261–281, and 338–358; these read MIAF…MIVM, WYFL…DYFF, HRFI…LSLV, LVIH…SCVI, GFIG…YVMS, and SALS…ASGF.

The protein belongs to the CDS family. Homodimer.

The protein resides in the endoplasmic reticulum membrane. The catalysed reaction is a 1,2-diacyl-sn-glycero-3-phosphate + CTP + H(+) = a CDP-1,2-diacyl-sn-glycerol + diphosphate. It catalyses the reaction 1-octadecanoyl-2-(5Z,8Z,11Z,14Z-eicosatetraenoyl)-sn-glycero-3-phosphate + CTP + H(+) = 1-octadecanoyl-2-(5Z,8Z,11Z,14Z-eicosatetraenoyl)-sn-glycero-3-cytidine-5'-diphosphate + diphosphate. The enzyme catalyses 1-octadecanoyl-2-(9Z,12Z-octadecadienoyl)-sn-glycero-3-phosphate + CTP + H(+) = 1-octadecanoyl-2-(9Z,12Z-octadecadienoyl)-sn-glycero-3-cytidine-5'-diphosphate + diphosphate. It carries out the reaction 1-hexadecanoyl-2-(5Z,8Z,11Z,14Z-eicosatetraenoyl)-sn-glycero-3-phosphate + CTP + H(+) = 1-hexadecanoyl-2-(5Z,8Z,11Z,14Z-eicosatetraenoyl)-sn-glycero-3-cytidine-5'-diphosphate + diphosphate. The catalysed reaction is 1,2-di-(5Z,8Z,11Z,14Z)-eicosatetraenoyl-sn-glycero-3-phosphate + CTP + H(+) = 1,2-di-(5Z,8Z,11Z,14Z-eicosatetraenoyl)-sn-glycero-3-cytidine-5'-diphosphate + diphosphate. It catalyses the reaction 1-octadecanoyl-2-(9Z-octadecenoyl)-sn-glycero-3-phosphate + CTP + H(+) = 1-octadecanoyl-2-(9Z-octadecenoyl)-sn-glycero-3-cytidine-5'-diphosphate + diphosphate. The enzyme catalyses 1-octadecanoyl-2-(4Z,7Z,10Z,13Z,16Z,19Z-docosahexaenoyl)-sn-glycero-3-phosphate + CTP + H(+) = 1-octadecanoyl-2-(4Z,7Z,10Z,13Z,16Z,19Z-docosahexaenoyl)-sn-glycero-3-cytidine-5'-diphosphate + diphosphate. It carries out the reaction 1,2-di-(9Z,12Z-octadecadienoyl)-sn-glycero-3-phosphate + CTP + H(+) = 1,2-di-(9Z,12Z-octadecadienoyl)-sn-glycero-3-cytidine-5'-diphosphate + diphosphate. The catalysed reaction is 1,2-di-(9Z-octadecenoyl)-sn-glycero-3-phosphate + CTP + H(+) = 1,2-di-(9Z-octadecenoyl)-sn-glycero-3-cytidine-5'-diphosphate + diphosphate. It participates in phospholipid metabolism; CDP-diacylglycerol biosynthesis; CDP-diacylglycerol from sn-glycerol 3-phosphate: step 3/3. Catalyzes the conversion of phosphatidic acid (PA) to CDP-diacylglycerol (CDP-DAG), an essential intermediate in the synthesis of phosphatidylglycerol, cardiolipin and phosphatidylinositol. Exhibits specificity for the nature of the acyl chains at the sn-1 and sn-2 positions in the substrate, PA and the preferred acyl chain composition is 1-stearoyl-2-arachidonoyl-sn-phosphatidic acid. Plays an important role in regulating the growth and maturation of lipid droplets which are storage organelles at the center of lipid and energy homeostasis. This is Phosphatidate cytidylyltransferase 2 from Rattus norvegicus (Rat).